Here is a 423-residue protein sequence, read N- to C-terminus: Zinc finger and BTB domain-containing protein 6 (423 aa).

The BTB domain occupies 33–97 (CDVSIYINDT…CYTGALEVKR (65 aa)). A Phosphoserine modification is found at Ser201. 4 consecutive C2H2-type zinc fingers follow at residues 300 to 322 (HQCP…LKMH), 325 to 347 (FLCL…IRGH), 353 to 375 (FQCT…LNIH), and 381 to 404 (YKCH…TSVH).

Its subcellular location is the nucleus. May be involved in transcriptional regulation. This is Zinc finger and BTB domain-containing protein 6 (Zbtb6) from Mus musculus (Mouse).